Here is a 485-residue protein sequence, read N- to C-terminus: ATP synthase subunit beta (485 aa).

Positions 1 to 20 (MSTTKTTKMTVKTGSKGTSG) are disordered. Residue 170-177 (GGAGVGKT) participates in ATP binding.

Belongs to the ATPase alpha/beta chains family. As to quaternary structure, F-type ATPases have 2 components, CF(1) - the catalytic core - and CF(0) - the membrane proton channel. CF(1) has five subunits: alpha(3), beta(3), gamma(1), delta(1), epsilon(1). CF(0) has three main subunits: a(1), b(2) and c(9-12). The alpha and beta chains form an alternating ring which encloses part of the gamma chain. CF(1) is attached to CF(0) by a central stalk formed by the gamma and epsilon chains, while a peripheral stalk is formed by the delta and b chains.

The protein resides in the cell membrane. It catalyses the reaction ATP + H2O + 4 H(+)(in) = ADP + phosphate + 5 H(+)(out). Functionally, produces ATP from ADP in the presence of a proton gradient across the membrane. The catalytic sites are hosted primarily by the beta subunits. In Mycobacterium leprae (strain TN), this protein is ATP synthase subunit beta.